Reading from the N-terminus, the 947-residue chain is Beta-glucosidase (947 aa).

The active site involves D696.

This sequence belongs to the glycosyl hydrolase 3 family.

The enzyme catalyses Hydrolysis of terminal, non-reducing beta-D-glucosyl residues with release of beta-D-glucose.. It functions in the pathway glycan metabolism; cellulose degradation. The polypeptide is Beta-glucosidase (Ruminococcus albus).